The sequence spans 228 residues: ATP synthase subunit a (228 aa).

6 consecutive transmembrane segments (helical) span residues 14–34, 71–91, 101–121, 139–159, 165–185, and 188–208; these read YFLLMPMTLASMLMAISWLFF, WVPIITTVFILLFSVNVLGLL, ISLTYSIGIPIWMSVNILGFY, FLLPLMVIIETLSLFAQPIAL, ANLTAGHLLIYLMSTAIWVLM, and VAIASITLIIFILLFLLEIGV.

This sequence belongs to the ATPase A chain family. F-type ATPases have 2 components, CF(1) - the catalytic core - and CF(0) - the membrane proton channel. CF(1) has five subunits: alpha(3), beta(3), gamma(1), delta(1), epsilon(1). CF(0) has three main subunits: a, b and c.

The protein localises to the mitochondrion inner membrane. In terms of biological role, mitochondrial membrane ATP synthase (F(1)F(0) ATP synthase or Complex V) produces ATP from ADP in the presence of a proton gradient across the membrane which is generated by electron transport complexes of the respiratory chain. F-type ATPases consist of two structural domains, F(1) - containing the extramembraneous catalytic core and F(0) - containing the membrane proton channel, linked together by a central stalk and a peripheral stalk. During catalysis, ATP synthesis in the catalytic domain of F(1) is coupled via a rotary mechanism of the central stalk subunits to proton translocation. Key component of the proton channel; it may play a direct role in the translocation of protons across the membrane. This is ATP synthase subunit a (ATP6) from Pisaster ochraceus (Ochre sea star).